Here is an 822-residue protein sequence, read N- to C-terminus: MNTADQARVGPADDGPAPSGEEEGEGGGEAGGKEPAADAAPGPSAAFRLMVTRREPAVKLQYAVSGLEPLAWSEDHRVSVSTARSIAVLELICDVHNPGQDLVIHRTSVPAPLNSCLLKVGSKTEVAECKEKFAASKDPTVSQTFMLDRVFNPEGKALPPMRGFKYTSWSPMGCDANGRCLLAALTMDNRLTIQANLNRLQWVQLVDLTEIYGERLYETSYRLSKNEAPEGNLGDFAEFQRRHSMQTPVRMEWSGICTTQQVKHNNECRDVGSVLLAVLFENGNIAVWQFQLPFVGKESISSCNTIESGITSPSVLFWWEYEHNNRKMSGLIVGSAFGPIKILPVNLKAVKGYFTLRQPVILWKEMDQLPVHSIKCVPLYHPYQKCSCSLVVAARGSYVFWCLLLISKAGLNVHNSHVTGLHSLPIVSMTADKQNGTVYTCSSDGKVRQLIPIFTDVALKFEHQLIKLSDVFGSVRTHGIAVSPCGAYLAIITTEGMINGLHPVNKNYQVQFVTLKTFEEAAAQLLESSVQNLFKQVDLIDLVRWKILKDKHIPQFLQEALEKKIESSGVTYFWRFKLFLLRILYQSMQKTPSEALWKPTHEDSKILLVDSPGMGNADDEQQEEGTSSKQVVKQGLQERSKEGDVEEPTDDSLPTTGDAGGREPMEEKLLEIQGKIEAVEMHLTREHMKRVLGEVYLHTWITENTSIPTRGLCNFLMSDEEYDDRTARVLIGHISKKMNKQTFPEHCSLCKEILPFTDRKQAVCSNGHIWLRCFLTYQSCQSLIYRRCLLHDSIARHPAPEDPDWIKRLLQSPCPFCDSPVF.

Position 1 is an N-acetylmethionine (M1). The tract at residues 1-41 (MNTADQARVGPADDGPAPSGEEEGEGGGEAGGKEPAADAAP) is disordered. The residue at position 19 (S19) is a Phosphoserine. K225 participates in a covalent cross-link: Glycyl lysine isopeptide (Lys-Gly) (interchain with G-Cter in SUMO2). 2 positions are modified to phosphoserine: S604 and S611. Positions 608–663 (LVDSPGMGNADDEQQEEGTSSKQVVKQGLQERSKEGDVEEPTDDSLPTTGDAGGRE) are disordered. Residue K629 forms a Glycyl lysine isopeptide (Lys-Gly) (interchain with G-Cter in SUMO2) linkage. The residue at position 652 (S652) is a Phosphoserine.

The protein belongs to the TFIIIC subunit 4 family. Part of the TFIIIC subcomplex TFIIIC2, consisting of six subunits, GTF3C1, GTF3C2, GTF3C3, GTF3C4, GTF3C5 and GTF3C6. Interacts with BRF1, GTF3C1, GTF3C2, GTF3C5, GTF3C6, POLR3C and POLR3F.

It localises to the nucleus. It catalyses the reaction L-lysyl-[protein] + acetyl-CoA = N(6)-acetyl-L-lysyl-[protein] + CoA + H(+). Functionally, essential for RNA polymerase III to make a number of small nuclear and cytoplasmic RNAs, including 5S RNA, tRNA, and adenovirus-associated (VA) RNA of both cellular and viral origin. Has histone acetyltransferase activity (HAT) with unique specificity for free and nucleosomal H3. May cooperate with GTF3C5 in facilitating the recruitment of TFIIIB and RNA polymerase through direct interactions with BRF1, POLR3C and POLR3F. May be localized close to the A box. This is General transcription factor 3C polypeptide 4 (GTF3C4) from Homo sapiens (Human).